We begin with the raw amino-acid sequence, 180 residues long: Large ribosomal subunit protein uL5 (180 aa).

This sequence belongs to the universal ribosomal protein uL5 family. As to quaternary structure, part of the 50S ribosomal subunit; part of the 5S rRNA/L5/L18/L25 subcomplex. Contacts the 5S rRNA and the P site tRNA. Forms a bridge to the 30S subunit in the 70S ribosome.

Functionally, this is one of the proteins that bind and probably mediate the attachment of the 5S RNA into the large ribosomal subunit, where it forms part of the central protuberance. In the 70S ribosome it contacts protein S13 of the 30S subunit (bridge B1b), connecting the 2 subunits; this bridge is implicated in subunit movement. Contacts the P site tRNA; the 5S rRNA and some of its associated proteins might help stabilize positioning of ribosome-bound tRNAs. This chain is Large ribosomal subunit protein uL5, found in Streptococcus mutans serotype c (strain ATCC 700610 / UA159).